A 191-amino-acid chain; its full sequence is MSPISILLIGFAMSTDAFAAAIGKGAAMRRPVFRDALRAGIIFGVIEAITPIIGWLLGRAALQYVEAFDHWIAFGLLGALGIHMIYNGLRPDSAEEDEDPSQHHGFWKLALTGFATSIDAMAVGIGLAFMDVHIGVMAAVIGLCTLTMVTAGIMFGRVLGSMVGKRAEIIGGVILVIIGATILYEHLHGVG.

Helical transmembrane passes span 3–23, 37–57, 65–85, 107–129, 144–164, and 169–189; these read PISILLIGFAMSTDAFAAAIG, LRAGIIFGVIEAITPIIGWLL, VEAFDHWIAFGLLGALGIHMI, WKLALTGFATSIDAMAVGIGLAF, CTLTMVTAGIMFGRVLGSMVG, and IIGGVILVIIGATILYEHLHG.

The protein belongs to the MntP (TC 9.B.29) family.

It localises to the cell inner membrane. Its function is as follows. Probably functions as a manganese efflux pump. The chain is Putative manganese efflux pump MntP from Stenotrophomonas maltophilia (strain K279a).